Consider the following 379-residue polypeptide: EP300-interacting inhibitor of differentiation 3 (379 aa).

Residues 32–58 adopt a coiled-coil conformation; the sequence is LKQVEEEEEVEALKVEVAAASDTESDT.

The protein belongs to the NSE4 family. In terms of assembly, component of the SMC5-SMC6 complex which consists at least of SMC5, SMC6, NSMCE2, NSMCE1, NSMCE4A or EID3 and NSMCE3. NSMCE1, NSMCE4A or EID3 and NSMCE3 probably form a subcomplex that bridges the head domains of the SMC5:SMC6 heterodimer. Homodimer, and heterodimer with EID2. Interacts with the C-terminal region of CREBBP.

The protein localises to the nucleus. It is found in the cytoplasm. The protein resides in the chromosome. It localises to the telomere. Functionally, tissue-specific component of the SMC5-SMC6 complex, a complex involved in repair of DNA double-strand breaks by homologous recombination. The complex may promote sister chromatid homologous recombination by recruiting the SMC1-SMC3 cohesin complex to double-strand breaks. The complex is required for telomere maintenance via recombination and mediates sumoylation of shelterin complex (telosome) components. In terms of biological role, acts as a repressor of nuclear receptor-dependent transcription possibly by interfering with CREBBP-dependent coactivation. May function as a coinhibitor of other CREBBP/EP300-dependent transcription factors. The polypeptide is EP300-interacting inhibitor of differentiation 3 (Bos taurus (Bovine)).